Consider the following 386-residue polypeptide: Copper-containing nitrite reductase (386 aa).

The signal sequence occupies residues 1–18 (MKRQALAAIIASMFALAA). C19 carries the N-palmitoyl cysteine lipid modification. C19 carries S-diacylglycerol cysteine lipidation. Plastocyanin-like domains lie at 97–191 (WTFD…ILVE) and 241–342 (GHVG…LKVE). H130, H135, H170, C171, H179, and M184 together coordinate Cu cation. H135 provides a ligand contact to substrate. Position 276 (H276) interacts with substrate. H325 is a binding site for Cu cation. The disordered stretch occupies residues 363–386 (GAAPAASAPAASAPAASAPAKSDY). Residues 364–386 (AAPAASAPAASAPAASAPAKSDY) show a composition bias toward low complexity. 3 repeat units span residues 367 to 371 (AASAP), 372 to 376 (AASAP), and 377 to 381 (AASAP). Positions 367–381 (AASAPAASAPAASAP) are 3 X 5 AA tandem repeats of A-A-S-A-P.

It belongs to the multicopper oxidase family. As to quaternary structure, homotrimer. The cofactor is Cu(+). Cu(2+) is required as a cofactor.

The protein resides in the cell outer membrane. The catalysed reaction is nitric oxide + Fe(III)-[cytochrome c] + H2O = Fe(II)-[cytochrome c] + nitrite + 2 H(+). In terms of biological role, catalyzes the reduction of nitrite to nitric oxide (NO). It could be essential for growth and survival in oxygen-depleted environments. The sequence is that of Copper-containing nitrite reductase (aniA) from Neisseria meningitidis serogroup A / serotype 4A (strain DSM 15465 / Z2491).